The primary structure comprises 203 residues: N-(5'-phosphoribosyl)anthranilate isomerase (203 aa).

Belongs to the TrpF family.

The catalysed reaction is N-(5-phospho-beta-D-ribosyl)anthranilate = 1-(2-carboxyphenylamino)-1-deoxy-D-ribulose 5-phosphate. Its pathway is amino-acid biosynthesis; L-tryptophan biosynthesis; L-tryptophan from chorismate: step 3/5. The chain is N-(5'-phosphoribosyl)anthranilate isomerase from Thermoanaerobacter sp. (strain X514).